The primary structure comprises 285 residues: 2-dehydro-3-deoxyphosphooctonate aldolase (285 aa).

The protein belongs to the KdsA family.

Its subcellular location is the cytoplasm. It catalyses the reaction D-arabinose 5-phosphate + phosphoenolpyruvate + H2O = 3-deoxy-alpha-D-manno-2-octulosonate-8-phosphate + phosphate. Its pathway is carbohydrate biosynthesis; 3-deoxy-D-manno-octulosonate biosynthesis; 3-deoxy-D-manno-octulosonate from D-ribulose 5-phosphate: step 2/3. It functions in the pathway bacterial outer membrane biogenesis; lipopolysaccharide biosynthesis. The protein is 2-dehydro-3-deoxyphosphooctonate aldolase of Polaromonas naphthalenivorans (strain CJ2).